The sequence spans 87 residues: Small ribosomal subunit protein eS21 (87 aa).

This sequence belongs to the eukaryotic ribosomal protein eS21 family. As to quaternary structure, component of the small ribosomal subunit. Mature ribosomes consist of a small (40S) and a large (60S) subunit. The 40S subunit contains about 33 different proteins and 1 molecule of RNA (18S). The 60S subunit contains about 49 different proteins and 3 molecules of RNA (25S, 5.8S and 5S).

The protein localises to the cytoplasm. Functionally, required for the processing of the 20S rRNA-precursor to mature 18S rRNA in a late step of the maturation of 40S ribosomal subunits. Has a physiological role leading to 18S rRNA stability. The protein is Small ribosomal subunit protein eS21 (RPS21) of Candida glabrata (strain ATCC 2001 / BCRC 20586 / JCM 3761 / NBRC 0622 / NRRL Y-65 / CBS 138) (Yeast).